A 284-amino-acid polypeptide reads, in one-letter code: Tropomyosin-1 (284 aa).

The stretch at 1–284 (MDGIKKKMIA…DQTFAELTGY (284 aa)) forms a coiled coil. The disordered stretch occupies residues 111–131 (TKLEEASKTAEESERGRKDLE).

The protein belongs to the tropomyosin family. In terms of assembly, homodimer.

Functionally, tropomyosin, in association with the troponin complex, plays a central role in the calcium dependent regulation of muscle contraction. The protein is Tropomyosin-1 of Schistosoma mansoni (Blood fluke).